A 188-amino-acid chain; its full sequence is Putative ankyrin repeat protein FPV230 (188 aa).

4 ANK repeats span residues 2-31, 36-65, 135-164, and 168-187; these read ENELKLYYAVSSQNENLVIQLLNKGYNPNA, KYMIPLHKAVECRNVDITKHLLSNGADANV, LGSTPLHIASKYNNKTMVKFFLERGADINI, and NNNTPLIYAVCSVIRLYLKC.

This is Putative ankyrin repeat protein FPV230 from Vertebrata (FPV).